A 532-amino-acid chain; its full sequence is MGAAASRRRALRSEAMSSVAAKVRAARAFGEYLSQSHPENRNGADHLLADAYSGHEGSPEMQPAPHNKRRLSLVSNGRYEGSISDEAVSGKTATEGPQPRVYTISREPALLPGSEAEAIELAVVKGRRQRERHPHHHSQPLRASPGSSREDISRPCQSWAGSRQGSKECPGCAKLVPGPSPRAFGLEQPPLPEASGRHKKLERMYSVDGVSDDVPIRTWFPKENPFSFQTATTTMQAISVFRGYAERKRRKRENDSASVIQRNFRKHLRMVGSRRVKAQTFAERRERSFSRSWSDPTPMKADTSHDSRDSSDLQSSHCTLDEACEDLDWDTEKGLEATACDTEGFLPPKVMLISSKVPKAEYIPTIIRRDDPSIIPILYDHEHATFEDILEEIEKKLNIYHKGAKIWKMLIFCQGGPGHLYLLKNKVATFAKVEKEEDMIHFWKRLSRLMSKVNPEPNVIHIMGCYILGNPNGEKLFQNLRTLMTPYKVTFESPLELSAQGKQMIETYFDFRLYRLWKSRQHSKLLDFDDVL.

G2 carries the N-myristoyl glycine lipid modification. Residues 2–235 (GAAASRRRAL…FSFQTATTTM (234 aa)) form a necessary and sufficient to elicit dendritic processes and synaptic contacts region. Disordered regions lie at residues 34-67 (SQSH…APHN) and 127-174 (RRQR…GCAK). Residues 38–48 (PENRNGADHLL) are compositionally biased toward basic and acidic residues. Basic residues predominate over residues 127-139 (RRQRERHPHHHSQ). Over residues 155 to 164 (PCQSWAGSRQ) the composition is skewed to polar residues. At S206 the chain carries Phosphoserine. Residues 247–252 (RKRRKR) carry the Nuclear localization signal motif. Residues 275–315 (RVKAQTFAERRERSFSRSWSDPTPMKADTSHDSRDSSDLQS) form a disordered region. Residues S292 and S294 each carry the phosphoserine modification. Residues 302-311 (DTSHDSRDSS) are compositionally biased toward basic and acidic residues.

The protein belongs to the NSMF family. Interacts with KPNA1; the interaction occurs in a calcium-independent manner after synaptic NMDA receptor stimulation and is required for nuclear import of NSMF but is competed by CABP1. Interacts (via the central NLS-containing motif region) with CABP1 (via EF-hands 1 and 2); the interaction occurs in a calcium-dependent manner after synaptic NMDA receptor stimulation and prevents the nuclear import of NSMF. Cannot be competed by calmodulin. Proteolytically processed after NMDA receptor activation. Cleaved in a calcium-dependent and calpain-sensitive manner. Calpain cleavage is essential for the translocation process from dendrites to the nucleus. Expressed in the radiatum and pyramidale strata of the hippocampus (at protein level). Strongly expressed in the brain. Expressed in the sensory and motor cortex, hippocampus, olfactory bulb, thalamus and amygdala. In the olfactory bulb expressed in the granular cell layer, mitral cell layer and the glomerular layer. In the hippocampus highly expressed in the regions associated with neuronal cell types as CA1, CA2, CA3 and granule cells of the dentate gyrus. All isoforms have been detected in the molecular layers of the hippocampus.

Its subcellular location is the nucleus. The protein localises to the nucleus envelope. It is found in the nucleus membrane. It localises to the nucleus matrix. The protein resides in the cytoplasm. Its subcellular location is the cell cortex. The protein localises to the cytoskeleton. It is found in the cell membrane. It localises to the cell projection. The protein resides in the dendrite. Its subcellular location is the synapse. The protein localises to the synaptosome. It is found in the postsynaptic density. It localises to the membrane. Its function is as follows. Couples NMDA-sensitive glutamate receptor signaling to the nucleus and triggers long-lasting changes in the cytoarchitecture of dendrites and spine synapse processes. Part of the cAMP response element-binding protein (CREB) shut-off signaling pathway. Stimulates outgrowth of olfactory axons and migration of gonadotropin-releasing hormone (GnRH) and luteinizing-hormone-releasing hormone (LHRH) neuronal cells. The protein is NMDA receptor synaptonuclear signaling and neuronal migration factor (Nsmf) of Rattus norvegicus (Rat).